The primary structure comprises 156 residues: Putative pre-16S rRNA nuclease (156 aa).

Belongs to the YqgF nuclease family.

It is found in the cytoplasm. Functionally, could be a nuclease involved in processing of the 5'-end of pre-16S rRNA. This is Putative pre-16S rRNA nuclease from Nocardioides sp. (strain ATCC BAA-499 / JS614).